The primary structure comprises 341 residues: L-threonine 3-dehydrogenase (341 aa).

Cys-38 contacts Zn(2+). Residues Thr-40 and His-43 each act as charge relay system in the active site. Zn(2+) contacts are provided by His-63, Glu-64, Cys-93, Cys-96, Cys-99, and Cys-107. NAD(+) is bound by residues Ile-175, Asp-195, Arg-200, 262-264 (LGI), and 286-287 (IY).

This sequence belongs to the zinc-containing alcohol dehydrogenase family. Homotetramer. It depends on Zn(2+) as a cofactor.

The protein localises to the cytoplasm. The enzyme catalyses L-threonine + NAD(+) = (2S)-2-amino-3-oxobutanoate + NADH + H(+). The protein operates within amino-acid degradation; L-threonine degradation via oxydo-reductase pathway; glycine from L-threonine: step 1/2. Catalyzes the NAD(+)-dependent oxidation of L-threonine to 2-amino-3-ketobutyrate. This chain is L-threonine 3-dehydrogenase, found in Marinomonas sp. (strain MWYL1).